The following is a 124-amino-acid chain: Protein BEX3 (124 aa).

Positions 1 to 56 are disordered; sequence MANVHQENEEMEQPLQNGQEDRPVGGGEGHQPAANNNNNNHNHNHNHHRRGQARRL. The span at 42–53 shows a compositional bias: basic residues; sequence NHNHNHHRRGQA. An interaction with p75NTR/NGFR region spans residues 81-106; it reads EMFMEEMREIRRKLRELQLRNCLRIL. The interaction with 14-3-3 epsilon stretch occupies residues 81-124; it reads EMFMEEMREIRRKLRELQLRNCLRILMGELSNHHDHHDEFCLMP. A Nuclear export signal motif is present at residues 90-100; that stretch reads IRRKLRELQLR. The segment at 113–117 is his cluster; it reads HHDHH. Residue cysteine 121 coordinates Zn(2+).

The protein belongs to the BEX family. Self-associates. Binds to the DEATH domain of p75NTR/NGFR. Interacts with 14-3-3 epsilon (YWHAE). Interacts with DIABLO/SMAC. Ubiquitinated. Degraded by the proteasome. In terms of tissue distribution, widely expressed.

It localises to the nucleus. Its subcellular location is the cytoplasm. It is found in the cytosol. Its function is as follows. May be a signaling adapter molecule involved in NGFR/p75NTR-mediated apoptosis induced by NGF. Plays a role in zinc-triggered neuronal death. In absence of reductive stress, acts as a pseudosubstrate for the CRL2(FEM1B) complex: associates with FEM1B via zinc, thereby preventing association between FEM1B and its substrates. This is Protein BEX3 from Mus musculus (Mouse).